The sequence spans 195 residues: Flagellar transcriptional regulator FlhC (195 aa).

C137, C140, C157, and C160 together coordinate Zn(2+). The disordered stretch occupies residues 165–195 (RAGSARRKTTTRKAVAPTHKTTAASRKAVVA).

This sequence belongs to the FlhC family. In terms of assembly, heterohexamer composed of two FlhC and four FlhD subunits. Each FlhC binds a FlhD dimer, forming a heterotrimer, and a hexamer assembles by dimerization of two heterotrimers. Zn(2+) is required as a cofactor.

It is found in the cytoplasm. In terms of biological role, functions in complex with FlhD as a master transcriptional regulator that regulates transcription of several flagellar and non-flagellar operons by binding to their promoter region. Activates expression of class 2 flagellar genes, including fliA, which is a flagellum-specific sigma factor that turns on the class 3 genes. Also regulates genes whose products function in a variety of physiological pathways. The protein is Flagellar transcriptional regulator FlhC of Thauera aminoaromatica.